A 493-amino-acid chain; its full sequence is Lysine--tRNA ligase (493 aa).

Mg(2+) is bound by residues glutamate 404 and glutamate 411.

This sequence belongs to the class-II aminoacyl-tRNA synthetase family. Homodimer. Mg(2+) is required as a cofactor.

It is found in the cytoplasm. It catalyses the reaction tRNA(Lys) + L-lysine + ATP = L-lysyl-tRNA(Lys) + AMP + diphosphate. The protein is Lysine--tRNA ligase of Oceanobacillus iheyensis (strain DSM 14371 / CIP 107618 / JCM 11309 / KCTC 3954 / HTE831).